The sequence spans 351 residues: UDP-N-acetylenolpyruvoylglucosamine reductase (351 aa).

Positions 25-196 (HIQAQARWLL…TAVEFRLPLL (172 aa)) constitute an FAD-binding PCMH-type domain. Residue Arg173 is part of the active site. Residue Ser246 is the Proton donor of the active site. Glu343 is an active-site residue.

It belongs to the MurB family. FAD serves as cofactor.

It localises to the cytoplasm. It catalyses the reaction UDP-N-acetyl-alpha-D-muramate + NADP(+) = UDP-N-acetyl-3-O-(1-carboxyvinyl)-alpha-D-glucosamine + NADPH + H(+). Its pathway is cell wall biogenesis; peptidoglycan biosynthesis. Functionally, cell wall formation. This Xylella fastidiosa (strain M23) protein is UDP-N-acetylenolpyruvoylglucosamine reductase.